The sequence spans 47 residues: Potassium channel toxin gamma-KTx 5.2 (47 aa).

4 cysteine pairs are disulfide-bonded: Cys5/Cys23, Cys11/Cys34, Cys20/Cys39, and Cys24/Cys41.

The protein belongs to the ergtoxin family. Gamma-KTx 5 subfamily. Expressed by the venom gland.

The protein resides in the secreted. Its function is as follows. Reversibly blocks Kv11/ERG potassium channels. This is Potassium channel toxin gamma-KTx 5.2 from Centruroides gracilis (Slenderbrown scorpion).